The following is a 182-amino-acid chain: Small ribosomal subunit protein uS4c (182 aa).

The disordered stretch occupies residues L8–Q36. Residues M82–N143 enclose the S4 RNA-binding domain.

This sequence belongs to the universal ribosomal protein uS4 family. In terms of assembly, part of the 30S ribosomal subunit. Contacts protein S5. The interaction surface between S4 and S5 is involved in control of translational fidelity.

It localises to the plastid. The protein localises to the chloroplast. Its function is as follows. One of the primary rRNA binding proteins, it binds directly to 16S rRNA where it nucleates assembly of the body of the 30S subunit. In terms of biological role, with S5 and S12 plays an important role in translational accuracy. The chain is Small ribosomal subunit protein uS4c (rps4) from Dietes robinsoniana (Lord Howe wedding lily).